A 357-amino-acid chain; its full sequence is Selenide, water dikinase (357 aa).

Cys25 is a catalytic residue. Residues Lys28 and Thr57–Asp59 each bind ATP. Mg(2+) is bound at residue Asp60. ATP is bound by residues Asp77, Asp100, and Gly148–Ser150. Asp100 lines the Mg(2+) pocket. Asp236 serves as a coordination point for Mg(2+).

Belongs to the selenophosphate synthase 1 family. Class I subfamily. As to quaternary structure, homodimer. Mg(2+) serves as cofactor.

The catalysed reaction is hydrogenselenide + ATP + H2O = selenophosphate + AMP + phosphate + 2 H(+). Synthesizes selenophosphate from selenide and ATP. The sequence is that of Selenide, water dikinase from Pseudomonas straminea.